Reading from the N-terminus, the 280-residue chain is MNILITALEQSLIMLPLILGMYISYRILKITDLTVDGTYVLGAAVFARTIPFGLFHALIFAIIAGGINGSIVSFMQRNKRINGLIAGILANFMLYSVNLQIMQRPNISVLGMPTLLSILDLDNWLVPLILINSFIIVIVLILLKGNLGLFLRAFGFNKDLLIDLGKPAELYRMLGLSISNGLAALTGTLSAQVNGFADINMGYGVALVGIGAIIIGRQIFLNNINNFNALKEIFACFIGILFYFISLSILLHIGIDPINLKLILGIVLFISLSSVKREDL.

6 helical membrane-spanning segments follow: residues 3–23 (ILITALEQSLIMLPLILGMYI), 52–72 (FGLFHALIFAIIAGGINGSIV), 81–101 (INGLIAGILANFMLYSVNLQI), 123–143 (NWLVPLILINSFIIVIVLILL), 196–216 (FADINMGYGVALVGIGAIIIG), and 233–253 (IFACFIGILFYFISLSILLHI).

The protein resides in the cell membrane. This is an uncharacterized protein from Rickettsia prowazekii (strain Madrid E).